The primary structure comprises 272 residues: Microcin B17-processing protein McbC (272 aa).

The protein to R.leguminosarum TfxB which is involved in the processing of trifolitoxin.

Its subcellular location is the cytoplasm. Necessary to process the inactive microcin B17 (McbA) precursor into the active peptide. The chain is Microcin B17-processing protein McbC (mcbC) from Escherichia coli.